The primary structure comprises 203 residues: A-type ATP synthase subunit E (203 aa).

It belongs to the V-ATPase E subunit family. In terms of assembly, has multiple subunits with at least A(3), B(3), C, D, E, F, H, I and proteolipid K(x).

Its subcellular location is the cell membrane. In terms of biological role, component of the A-type ATP synthase that produces ATP from ADP in the presence of a proton gradient across the membrane. This Thermococcus sibiricus (strain DSM 12597 / MM 739) protein is A-type ATP synthase subunit E.